The chain runs to 610 residues: Nuclear factor 7, ovary (610 aa).

The Tudor-knot domain maps to 21-75 (NVGSTYPCKRSDGSQHDADIVKTRYNKQAGREEYYVHYVGLNRRQNEWVDKSRLV). The segment at 79 to 127 (PPKEVETNGTDQEEMTEPTEQPDSKTPQKRKLEEPEPEPKKAKVEDKDA) is disordered. Thr104 bears the Phosphothreonine; by CDK1 mark. A compositionally biased stretch (basic and acidic residues) spans 108–127 (RKLEEPEPEPKKAKVEDKDA). An RING-type zinc finger spans residues 146–186 (CPLCVELFKDPVMVACGHNFCRSCIDKVWEGQSSFACPECK). Residues 220-261 (RPLEKCSEHDERLKLYCKDDGTLGCVICRDSLKHASHNFLPI) form a B box-type zinc finger. Residues Cys225, His228, Cys247, and His253 each contribute to the Zn(2+) site. Positions 295-374 (DKIEQHNKNV…AKERMEETDS (80 aa)) form a coiled coil. Residues 415 to 610 (PIQYIMWKEL…VDALRFVHNQ (196 aa)) enclose the B30.2/SPRY domain.

As to quaternary structure, monomer. As to expression, abundant in oocytes. At the neurula stage, low expression in dorsal embryo region including neural folds and somites.

The protein resides in the nucleus. Functionally, transcription factor that determines dorsal-ventral body axis. This is Nuclear factor 7, ovary from Xenopus laevis (African clawed frog).